Reading from the N-terminus, the 1866-residue chain is Nucleoporin Nup188 (1866 aa).

It belongs to the Nup188 family. In terms of assembly, part of the nuclear pore complex (NPC).

It is found in the nucleus. It localises to the nuclear pore complex. Component of the nuclear pore complex (NPC), a complex required for the trafficking across the nuclear envelope. Required for proper protein transport into the nucleus. The chain is Nucleoporin Nup188 from Drosophila melanogaster (Fruit fly).